A 212-amino-acid polypeptide reads, in one-letter code: Thymidylate kinase (212 aa).

Gly11–Thr18 contacts ATP.

This sequence belongs to the thymidylate kinase family.

It carries out the reaction dTMP + ATP = dTDP + ADP. In terms of biological role, phosphorylation of dTMP to form dTDP in both de novo and salvage pathways of dTTP synthesis. The chain is Thymidylate kinase from Streptococcus pneumoniae (strain CGSP14).